The following is a 364-amino-acid chain: Protein trichome birefringence-like 40 (364 aa).

Residues 9–25 (LASLSLILFSSFPGLLA) traverse the membrane as a helical; Signal-anchor for type II membrane protein segment. The GDS motif motif lies at 118–120 (GDS). Positions 341 to 355 (DCSHWCLPGLPDTWN) match the DCXHWCLPGXXDXWN motif motif.

It belongs to the PC-esterase family. TBL subfamily.

It localises to the membrane. Functionally, may act as a bridging protein that binds pectin and other cell wall polysaccharides. Probably involved in maintaining esterification of pectins. May be involved in the specific O-acetylation of cell wall polymers. This chain is Protein trichome birefringence-like 40 (TBL40), found in Arabidopsis thaliana (Mouse-ear cress).